Here is a 149-residue protein sequence, read N- to C-terminus: Large ribosomal subunit protein uL22c (149 aa).

This sequence belongs to the universal ribosomal protein uL22 family. In terms of assembly, part of the 50S ribosomal subunit.

It is found in the plastid. The protein localises to the chloroplast. Functionally, this protein binds specifically to 23S rRNA. Its function is as follows. The globular domain of the protein is located near the polypeptide exit tunnel on the outside of the subunit, while an extended beta-hairpin is found that lines the wall of the exit tunnel in the center of the 70S ribosome. This chain is Large ribosomal subunit protein uL22c (rpl22), found in Hordeum vulgare (Barley).